We begin with the raw amino-acid sequence, 270 residues long: Sulfur carrier protein FdhD (270 aa).

Basic and acidic residues-rich tracts occupy residues 1–10 (MSMQDHDRTE) and 20–30 (RHLDGSSRPDW). A disordered region spans residues 1-30 (MSMQDHDRTEQGMTSLAVTRHLDGSSRPDW). Cys117 acts as the Cysteine persulfide intermediate in catalysis.

The protein belongs to the FdhD family.

Its subcellular location is the cytoplasm. In terms of biological role, required for formate dehydrogenase (FDH) activity. Acts as a sulfur carrier protein that transfers sulfur from IscS to the molybdenum cofactor prior to its insertion into FDH. The chain is Sulfur carrier protein FdhD from Chromobacterium violaceum (strain ATCC 12472 / DSM 30191 / JCM 1249 / CCUG 213 / NBRC 12614 / NCIMB 9131 / NCTC 9757 / MK).